Here is a 373-residue protein sequence, read N- to C-terminus: Velvet complex subunit RYP3 (373 aa).

The segment covering 1–10 has biased composition (basic and acidic residues); it reads MYTLKQDRPH. 2 disordered regions span residues 1–26 and 344–373; these read MYTL…LQHG and RKDG…ENEG. The Velvet domain maps to 48–344; the sequence is VYEGRIYSLD…AFQGIKIPIR (297 aa). A compositionally biased stretch (acidic residues) spans 364 to 373; that stretch reads GEGEDWENEG.

Belongs to the velvet family. VelB subfamily. As to quaternary structure, component of the heterotrimeric velvet complex composed of LAE1, VEL1 and VEL2; VEL1A acting as a bridging protein between LAE1 and VEL2. Forms a heterodimeric complex with VOS1; the formation of the VEL2-VOS1 complex is light-dependent.

It localises to the nucleus. Its subcellular location is the cytoplasm. Its function is as follows. Component of the velvet transcription factor complex that controls sexual/asexual developmental ratio in response to light, promoting sexual development in the darkness while stimulating asexual sporulation under illumination. The velvet complex acts as a global regulator for secondary metabolite gene expression. Component of the RYP2-RYP3 heterodimeric complex that plays a dual role in activating genes associated with spore maturation and repressing certain development-associated genes. The complex binds DNA through the DNA-binding domain of RYP2 that recognizes an 11-nucleotide consensus sequence 5'-CTGGCCGCGGC-3' consisting of two motifs in the promoters of key developmental regulatory genes. Required for viable spore production and regulation of sporulation in response to temperature, as well as for the switch to yeast-form in the presence of host cells. The polypeptide is Velvet complex subunit RYP3 (RYP3) (Ajellomyces capsulatus (Darling's disease fungus)).